The primary structure comprises 359 residues: Elongation factor Ts 1, mitochondrial (359 aa).

The segment covering 323 to 341 has biased composition (low complexity); sequence GKAAPAPKAEEPAAVAPAK. The tract at residues 323–345 is disordered; sequence GKAAPAPKAEEPAAVAPAKADAE.

The protein belongs to the EF-Ts family.

Its subcellular location is the mitochondrion. Associates with the EF-Tu.GDP complex and induces the exchange of GDP to GTP. It remains bound to the aminoacyl-tRNA.EF-Tu.GTP complex up to the GTP hydrolysis stage on the ribosome. The protein is Elongation factor Ts 1, mitochondrial of Thalassiosira pseudonana (Marine diatom).